The sequence spans 255 residues: Aliphatic sulfonates import ATP-binding protein SsuB (255 aa).

One can recognise an ABC transporter domain in the interval 12 to 233 (LLLNAVSKHY…RLGSVRLAEL (222 aa)). Residue 44–51 (GRSGGGKS) coordinates ATP.

The protein belongs to the ABC transporter superfamily. Aliphatic sulfonates importer (TC 3.A.1.17.2) family. As to quaternary structure, the complex is composed of two ATP-binding proteins (SsuB), two transmembrane proteins (SsuC) and a solute-binding protein (SsuA).

The protein localises to the cell inner membrane. It catalyses the reaction ATP + H2O + aliphatic sulfonate-[sulfonate-binding protein]Side 1 = ADP + phosphate + aliphatic sulfonateSide 2 + [sulfonate-binding protein]Side 1.. Part of the ABC transporter complex SsuABC involved in aliphatic sulfonates import. Responsible for energy coupling to the transport system. In Shigella flexneri serotype 5b (strain 8401), this protein is Aliphatic sulfonates import ATP-binding protein SsuB.